Here is a 315-residue protein sequence, read N- to C-terminus: Lipoyl synthase (315 aa).

The segment at 1–33 (MADMPPVLRHPEKAHRPDQPQPKKPDWIRVKAP) is disordered. Residues 9 to 29 (RHPEKAHRPDQPQPKKPDWIR) are compositionally biased toward basic and acidic residues. Residues Cys54, Cys59, Cys65, Cys80, Cys84, Cys87, and Ser294 each coordinate [4Fe-4S] cluster. A Radical SAM core domain is found at 66-283 (WSQGHATMMI…EKAAYGKGFL (218 aa)).

It belongs to the radical SAM superfamily. Lipoyl synthase family. [4Fe-4S] cluster serves as cofactor.

It is found in the cytoplasm. The catalysed reaction is [[Fe-S] cluster scaffold protein carrying a second [4Fe-4S](2+) cluster] + N(6)-octanoyl-L-lysyl-[protein] + 2 oxidized [2Fe-2S]-[ferredoxin] + 2 S-adenosyl-L-methionine + 4 H(+) = [[Fe-S] cluster scaffold protein] + N(6)-[(R)-dihydrolipoyl]-L-lysyl-[protein] + 4 Fe(3+) + 2 hydrogen sulfide + 2 5'-deoxyadenosine + 2 L-methionine + 2 reduced [2Fe-2S]-[ferredoxin]. It participates in protein modification; protein lipoylation via endogenous pathway; protein N(6)-(lipoyl)lysine from octanoyl-[acyl-carrier-protein]: step 2/2. Its function is as follows. Catalyzes the radical-mediated insertion of two sulfur atoms into the C-6 and C-8 positions of the octanoyl moiety bound to the lipoyl domains of lipoate-dependent enzymes, thereby converting the octanoylated domains into lipoylated derivatives. The polypeptide is Lipoyl synthase (Paracoccus denitrificans (strain Pd 1222)).